The sequence spans 260 residues: 21S rRNA pseudouridine(2819) synthase (260 aa).

Asp-68 is an active-site residue.

Belongs to the pseudouridine synthase RluA family.

It localises to the mitochondrion. It catalyses the reaction uridine(2819) in 21S rRNA = pseudouridine(2819) in 21S rRNA. Its function is as follows. Pseudouridylate synthase responsible for the pseudouridine-2819 formation in mitochondrial 21S rRNA. May modulate the efficiency or the fidelity of the mitochondrial translation machinery. The polypeptide is 21S rRNA pseudouridine(2819) synthase (PUS5) (Eremothecium gossypii (strain ATCC 10895 / CBS 109.51 / FGSC 9923 / NRRL Y-1056) (Yeast)).